The following is a 340-amino-acid chain: MAEGGELMSRLLSENADLKKQVRLLKENQMLRRLLSQSCQEGGGHDLLPPRAHAYPEAGSPGSGVPDFGRFTSVADTPSQLQTSSLEDLLCSHAPLSSEDDTSPGCAAPSQAPFKAFLSPPEPHSHRGTDRKLSPLLSPLQDSLVDKTLLEPREMVRPKKVCFSESSLPTGDRTRRSYYLNEIQSFAGAEKDARVVGEIAFQLDRRILAYVFPGVTRLYGFTVANIPEKIEQTSTKSLDGSVDERKLRELTQRYLALSARLEKLGYSRDVHPAFSEFLINTYGILKQRPDLRANPLHSSPAALRKLVIDVVPPKFLGDSLLLLNCLCELSKEDGKPLFAW.

Disordered stretches follow at residues 42–73 (GGGH…RFTS) and 94–135 (APLS…KLSP). Ser-60 bears the Phosphoserine mark. Positions 123 to 133 (PHSHRGTDRKL) are enriched in basic and acidic residues. At Ser-134 the chain carries Phosphoserine.

This sequence belongs to the speriolin family.

It is found in the cytoplasm. The polypeptide is Speriolin-like protein (SPATC1L) (Homo sapiens (Human)).